Reading from the N-terminus, the 183-residue chain is Inosine/xanthosine triphosphatase (183 aa).

Residue aspartate 75 participates in Mg(2+) binding. Position 75–76 (aspartate 75–glycine 76) interacts with substrate.

Belongs to the YjjX NTPase family. As to quaternary structure, homodimer. It depends on Mg(2+) as a cofactor. Mn(2+) serves as cofactor.

The catalysed reaction is XTP + H2O = XDP + phosphate + H(+). It carries out the reaction ITP + H2O = IDP + phosphate + H(+). In terms of biological role, phosphatase that hydrolyzes non-canonical purine nucleotides such as XTP and ITP to their respective diphosphate derivatives. Probably excludes non-canonical purines from DNA/RNA precursor pool, thus preventing their incorporation into DNA/RNA and avoiding chromosomal lesions. In Vibrio vulnificus (strain CMCP6), this protein is Inosine/xanthosine triphosphatase.